The sequence spans 289 residues: MILLQQVWLPLPNRPSTSPPMSVAARSTGTLQLPPQKAFGQEASLPLAGEEDLAKRGEPDSALEELCKPLFCKLCNVTLNSAQQAQAHYQGKNHGKKLRNYYAANSCPPPARMSSVAEPVATPLVPVPPQVGSCKPGGRVILATENDYCKLCDASFSSPAVAQAHYQGKNHAKRLRLAEAQSHSFSDSAEAGQRRTRKEGSEFKMVTTRRNMYTVQSNSGPYFNARSRQRIPRDLAMCVTPSGQFYCSMCNVGAGEEVEFRQHLESKQHKSKVSEQRYRSEMENLGYVQ.

2 Matrin-type zinc fingers span residues 70–100 (LFCK…KLRN) and 147–177 (DYCK…RLRL). Disordered regions lie at residues 180 to 202 (AQSH…EGSE) and 265 to 289 (ESKQ…GYVQ). The Matrin-type 3 zinc finger occupies 245–275 (FYCSMCNVGAGEEVEFRQHLESKQHKSKVSE). Residues 265–282 (ESKQHKSKVSEQRYRSEM) show a composition bias toward basic and acidic residues.

As to quaternary structure, interacts with dsRNA. In terms of tissue distribution, highly expressed in brain, gut, lung, and testis.

The protein resides in the nucleus. Its subcellular location is the nucleolus. Its function is as follows. Acts as a bona fide target gene of p53/TP53. May play a role in the TP53-dependent growth regulatory pathway. May contribute to TP53-mediated apoptosis by regulation of TP53 expression and translocation to the nucleus and nucleolus. The polypeptide is Zinc finger matrin-type protein 3 (Rattus norvegicus (Rat)).